Reading from the N-terminus, the 697-residue chain is Elongation factor G (697 aa).

One can recognise a tr-type G domain in the interval Glu-8–Leu-283. Residues Ala-17–Thr-24, Asp-81–His-85, and Asn-135–Asp-138 contribute to the GTP site.

The protein belongs to the TRAFAC class translation factor GTPase superfamily. Classic translation factor GTPase family. EF-G/EF-2 subfamily.

The protein resides in the cytoplasm. Catalyzes the GTP-dependent ribosomal translocation step during translation elongation. During this step, the ribosome changes from the pre-translocational (PRE) to the post-translocational (POST) state as the newly formed A-site-bound peptidyl-tRNA and P-site-bound deacylated tRNA move to the P and E sites, respectively. Catalyzes the coordinated movement of the two tRNA molecules, the mRNA and conformational changes in the ribosome. This Koribacter versatilis (strain Ellin345) protein is Elongation factor G.